Here is an 88-residue protein sequence, read N- to C-terminus: Small ribosomal subunit protein uS17 (88 aa).

The protein belongs to the universal ribosomal protein uS17 family. Part of the 30S ribosomal subunit.

One of the primary rRNA binding proteins, it binds specifically to the 5'-end of 16S ribosomal RNA. The protein is Small ribosomal subunit protein uS17 of Stutzerimonas stutzeri (strain A1501) (Pseudomonas stutzeri).